A 377-amino-acid polypeptide reads, in one-letter code: uncharacterized protein (377 aa).

The interval 1 to 25 (MAQQTNVAGQKTEKQRKAPFRADHV) is disordered. The segment covering 11–24 (KTEKQRKAPFRADH) has biased composition (basic and acidic residues).

The protein to B.subtilis YxjG.

This is an uncharacterized protein from Bacillus subtilis (strain 168).